We begin with the raw amino-acid sequence, 432 residues long: Enolase (432 aa).

Q167 lines the (2R)-2-phosphoglycerate pocket. Catalysis depends on E209, which acts as the Proton donor. Mg(2+) is bound by residues D246, E291, and D318. Residues K343, R372, S373, and K394 each contribute to the (2R)-2-phosphoglycerate site. K343 functions as the Proton acceptor in the catalytic mechanism.

The protein belongs to the enolase family. As to quaternary structure, component of the RNA degradosome, a multiprotein complex involved in RNA processing and mRNA degradation. Requires Mg(2+) as cofactor.

The protein localises to the cytoplasm. It is found in the secreted. It localises to the cell surface. The enzyme catalyses (2R)-2-phosphoglycerate = phosphoenolpyruvate + H2O. The protein operates within carbohydrate degradation; glycolysis; pyruvate from D-glyceraldehyde 3-phosphate: step 4/5. In terms of biological role, catalyzes the reversible conversion of 2-phosphoglycerate (2-PG) into phosphoenolpyruvate (PEP). It is essential for the degradation of carbohydrates via glycolysis. In Colwellia psychrerythraea (strain 34H / ATCC BAA-681) (Vibrio psychroerythus), this protein is Enolase.